The sequence spans 222 residues: Glutathione S-transferase alpha-1 (222 aa).

Residue M1 is modified to N-acetylmethionine. One can recognise a GST N-terminal domain in the interval 3-83 (GKPVLHYFNA…YIATKYDLYG (81 aa)). The residue at position 4 (K4) is an N6-succinyllysine. Glutathione is bound by residues Y9, K45, 54 to 55 (QV), and 67 to 68 (QT). A GST C-terminal domain is found at 85-208 (DMKERALIDM…QPGSQRKLPV (124 aa)).

Belongs to the GST superfamily. Alpha family. As to quaternary structure, homodimer. Homodimer or heterodimer of GSTA1 and GSTA2.

Its subcellular location is the cytoplasm. The catalysed reaction is RX + glutathione = an S-substituted glutathione + a halide anion + H(+). It catalyses the reaction prostaglandin A2 + glutathione = prostaglandin A2-S-(R)-glutathione. The enzyme catalyses prostaglandin J2 + glutathione = prostaglandin J2-S-(R)-glutathione. It carries out the reaction (13S)-hydroperoxy-(9Z,11E)-octadecadienoate + 2 glutathione = (13S)-hydroxy-(9Z,11E)-octadecadienoate + glutathione disulfide + H2O. The catalysed reaction is androst-5-ene-3,17-dione = androst-4-ene-3,17-dione. Glutathione S-transferase that catalyzes the nucleophilic attack of the sulfur atom of glutathione on the electrophilic groups of a wide range of exogenous and endogenous compounds. Involved in the formation of glutathione conjugates of both prostaglandin A2 (PGA2) and prostaglandin J2 (PGJ2). It also catalyzes the isomerization of D5-androstene-3,17-dione (AD) into D4-androstene-3,17-dione and may therefore play an important role in hormone biosynthesis. Through its glutathione-dependent peroxidase activity toward the fatty acid hydroperoxide (13S)-hydroperoxy-(9Z,11E)-octadecadienoate/13-HPODE it is also involved in the metabolism of oxidized linoleic acid. The protein is Glutathione S-transferase alpha-1 (Gsta1) of Rattus norvegicus (Rat).